The chain runs to 336 residues: GTPase Obg (336 aa).

The region spanning 1–159 (MKFVDEATLI…KTLKLELKLL (159 aa)) is the Obg domain. Residues 160 to 329 (ADVGLVGLPN…LIEAIFAQLR (170 aa)) form the OBG-type G domain. GTP-binding positions include 166–173 (GLPNAGKS), 191–195 (FTTLA), 213–216 (DIPG), 283–286 (NKMD), and 310–312 (SAI). Mg(2+) is bound by residues Ser-173 and Thr-193.

This sequence belongs to the TRAFAC class OBG-HflX-like GTPase superfamily. OBG GTPase family. As to quaternary structure, monomer. Mg(2+) is required as a cofactor.

The protein localises to the cytoplasm. Its function is as follows. An essential GTPase which binds GTP, GDP and possibly (p)ppGpp with moderate affinity, with high nucleotide exchange rates and a fairly low GTP hydrolysis rate. Plays a role in control of the cell cycle, stress response, ribosome biogenesis and in those bacteria that undergo differentiation, in morphogenesis control. The sequence is that of GTPase Obg from Desulfatibacillum aliphaticivorans.